A 265-amino-acid polypeptide reads, in one-letter code: 5'-nucleotidase SurE (265 aa).

4 residues coordinate a divalent metal cation: D9, D10, S40, and N96.

The protein belongs to the SurE nucleotidase family. It depends on a divalent metal cation as a cofactor.

The protein resides in the cytoplasm. The enzyme catalyses a ribonucleoside 5'-phosphate + H2O = a ribonucleoside + phosphate. Functionally, nucleotidase that shows phosphatase activity on nucleoside 5'-monophosphates. This chain is 5'-nucleotidase SurE, found in Methanothrix thermoacetophila (strain DSM 6194 / JCM 14653 / NBRC 101360 / PT) (Methanosaeta thermophila).